A 366-amino-acid chain; its full sequence is Inositol 2-dehydrogenase (366 aa).

Belongs to the Gfo/Idh/MocA family. As to quaternary structure, homotetramer.

The catalysed reaction is myo-inositol + NAD(+) = scyllo-inosose + NADH + H(+). Involved in the oxidation of myo-inositol (MI) to 2-keto-myo-inositol (2KMI or 2-inosose). This is Inositol 2-dehydrogenase from Rhodococcus jostii (strain RHA1).